Reading from the N-terminus, the 98-residue chain is Large ribosomal subunit protein uL23 (98 aa).

Belongs to the universal ribosomal protein uL23 family. In terms of assembly, part of the 50S ribosomal subunit. Contacts protein L29, and trigger factor when it is bound to the ribosome.

Its function is as follows. One of the early assembly proteins it binds 23S rRNA. One of the proteins that surrounds the polypeptide exit tunnel on the outside of the ribosome. Forms the main docking site for trigger factor binding to the ribosome. The protein is Large ribosomal subunit protein uL23 of Rickettsia prowazekii (strain Madrid E).